A 671-amino-acid polypeptide reads, in one-letter code: cGMP-dependent protein kinase 1 (671 aa).

Ser2 carries the post-translational modification N-acetylserine. Residues 2–59 (SELEEDFAKILMLKEERIKELEKRLSEKEEEIQELKRKLHKCQSVLPVPSTHIGPRTT) adopt a coiled-coil conformation. The segment at 2–102 (SELEEDFAKI…LIKEAILDND (101 aa)) is required for dimerization. Residues 9-44 (AKILMLKEERIKELEKRLSEKEEEIQELKRKLHKCQ) form a leucine-zipper region. The autoinhibitory domain stretch occupies residues 50-75 (PSTHIGPRTTRAQGISAEPQTYRSFH). Residue Thr59 is modified to Phosphothreonine; by autocatalysis. The tract at residues 103–220 (FMKNLELSQI…EYMEFLKSVP (118 aa)) is cGMP-binding, high affinity. 3',5'-cyclic GMP contacts are provided by residues 167-170 (GELA), 177-178 (RT), Arg282, 291-294 (GEKA), 301-302 (RT), and Tyr336. The interval 221-341 (TFQSLPDEIL…SNKAYEDAEA (121 aa)) is cGMP-binding, low affinity. One can recognise a Protein kinase domain in the interval 360-619 (FNIIDTLGVG…VKDIQKHKWF (260 aa)). ATP contacts are provided by residues 366–374 (LGVGGFGRV) and Lys390. The Proton acceptor role is filled by Asp484. Thr515 is modified (phosphothreonine). Residues 620–671 (EGFNWEGLRKGTLTPPIIPSVASPTDTSNFDSFPEDSDEPPPDDNSGWDIDF) form the AGC-kinase C-terminal domain. The interval 635–671 (PIIPSVASPTDTSNFDSFPEDSDEPPPDDNSGWDIDF) is disordered. Positions 652-661 (FPEDSDEPPP) are enriched in acidic residues.

It belongs to the protein kinase superfamily. AGC Ser/Thr protein kinase family. cGMP subfamily. Isoform alpha: parallel homodimer or heterodimer and also heterotetramer. Interacts directly with PPP1R12A. Non-covalent dimer of dimer of PRKG1-PRKG1 and PPP1R12A-PPP1R12A. This interaction targets PRKG1 to stress fibers to mediate smooth muscle cell relaxation and vasodilation in responses to rises in cGMP. Isoform beta: antiparallel homodimer. Part of cGMP kinase signaling complex at least composed of ACTA2/alpha-actin, CNN1/calponin H1, PLN/phospholamban, PRKG1 and ITPR1. Interacts with IRAG1. Forms a stable complex with ITPR1, IRAG1, and isoform beta of PRKG1. Interacts with TRPC7 (via ankyrin repeat domain). Isoform alpha interacts with RGS2. Interacts with GTF2I. Autophosphorylation increases kinase activity. Post-translationally, 65 kDa monomer is produced by proteolytic cleavage. As to expression, detected in cerebellum, hippocampus, dorsomedial hypothalamus, medulla, subcommissural organ, cerebral cortex, amygdala, habenulae, various hypothalamic regions, olfactory bulb, pituitary gland, and retina. Isoform alpha is prominent in the cerebellum and medulla, whereas isoform Beta is predominant in the cortex, hippocampus, hypothalamus, and olfactory bulb.

The protein localises to the cytoplasm. It catalyses the reaction L-seryl-[protein] + ATP = O-phospho-L-seryl-[protein] + ADP + H(+). The enzyme catalyses L-threonyl-[protein] + ATP = O-phospho-L-threonyl-[protein] + ADP + H(+). Its activity is regulated as follows. In the absence of cGMP, PRKG1 activity is suppressed by autoinhibitory contacts. In terms of biological role, serine/threonine protein kinase that acts as a key mediator of the nitric oxide (NO)/cGMP signaling pathway. GMP binding activates PRKG1, which phosphorylates serines and threonines on many cellular proteins. Numerous protein targets for PRKG1 phosphorylation are implicated in modulating cellular calcium, but the contribution of each of these targets may vary substantially among cell types. Proteins that are phosphorylated by PRKG1 regulate platelet activation and adhesion, smooth muscle contraction, cardiac function, gene expression, feedback of the NO-signaling pathway, and other processes involved in several aspects of the CNS like axon guidance, hippocampal and cerebellar learning, circadian rhythm and nociception. Smooth muscle relaxation is mediated through lowering of intracellular free calcium, by desensitization of contractile proteins to calcium, and by decrease in the contractile state of smooth muscle or in platelet activation. Regulates intracellular calcium levels via several pathways: phosphorylates IRAG1 and inhibits IP3-induced Ca(2+) release from intracellular stores, phosphorylation of KCNMA1 (BKCa) channels decreases intracellular Ca(2+) levels, which leads to increased opening of this channel. PRKG1 phosphorylates the canonical transient receptor potential channel (TRPC) family which inactivates the associated inward calcium current. Another mode of action of NO/cGMP/PKGI signaling involves PKGI-mediated inactivation of the Ras homolog gene family member A (RhoA). Phosphorylation of RHOA by PRKG1 blocks the action of this protein in myriad processes: regulation of RHOA translocation; decreasing contraction; controlling vesicle trafficking, reduction of myosin light chain phosphorylation resulting in vasorelaxation. Activation of PRKG1 by NO signaling also alters gene expression in a number of tissues. In smooth muscle cells, increased cGMP and PRKG1 activity influence expression of smooth muscle-specific contractile proteins, levels of proteins in the NO/cGMP signaling pathway, down-regulation of the matrix proteins osteopontin and thrombospondin-1 to limit smooth muscle cell migration and phenotype. Regulates vasodilator-stimulated phosphoprotein (VASP) functions in platelets and smooth muscle. In Mus musculus (Mouse), this protein is cGMP-dependent protein kinase 1 (Prkg1).